Here is a 397-residue protein sequence, read N- to C-terminus: MNIHEYQGKEIMKQYGISVPRSRITFTVEEAVQAAIDLGCEVIAVKAQIHAGGRGKAGGVKITRSLEETKSAAEAILDKILITKQTGPEGKVVNQVLIEEGLKIEKECYLSCAVDSTTSTVVLIGSPEGGMDIEEVAEKTPHKIFKESIDPAIGLQQYQARRLAFNMGINEACLQEAAQCIMNIYRLFMEKDCSMVEINPLITTEEHKVVALDCKVCFDDNSLCRHPEILKYRDLTEEDPREVQASKYDLSYISLSGNIGCMVNGAGLAMATMDMIDHFGGAPANFLDVGGGATAEKVKEAFKILISDKKVAGIFVNIFGGIMKCDVIATGILQAVNALDLDVPLVVRLEGTNVELGKEILKSSWLDVITVNSMAEGAEKIVALVNGKGVVRDERLN.

The 236-residue stretch at 9 to 244 (KEIMKQYGIS…LTEEDPREVQ (236 aa)) folds into the ATP-grasp domain. Residues Lys-46, 53-55 (GRG), Glu-99, Leu-102, and Glu-107 contribute to the ATP site. Mg(2+)-binding residues include Asn-199 and Asp-213. Substrate-binding positions include Asn-264 and 321–323 (GIM).

This sequence belongs to the succinate/malate CoA ligase beta subunit family. In terms of assembly, heterotetramer of two alpha and two beta subunits. Mg(2+) serves as cofactor.

It carries out the reaction succinate + ATP + CoA = succinyl-CoA + ADP + phosphate. It catalyses the reaction GTP + succinate + CoA = succinyl-CoA + GDP + phosphate. It participates in carbohydrate metabolism; tricarboxylic acid cycle; succinate from succinyl-CoA (ligase route): step 1/1. Succinyl-CoA synthetase functions in the citric acid cycle (TCA), coupling the hydrolysis of succinyl-CoA to the synthesis of either ATP or GTP and thus represents the only step of substrate-level phosphorylation in the TCA. The beta subunit provides nucleotide specificity of the enzyme and binds the substrate succinate, while the binding sites for coenzyme A and phosphate are found in the alpha subunit. This is Succinate--CoA ligase [ADP-forming] subunit beta from Alkaliphilus metalliredigens (strain QYMF).